A 349-amino-acid polypeptide reads, in one-letter code: Rhodopsin (349 aa).

The Extracellular portion of the chain corresponds to Thr1–Ala33. The N-linked (GlcNAc...) asparagine glycan is linked to Asn12. A helical transmembrane segment spans residues Tyr34 to Val58. Topologically, residues Thr59–Asn70 are cytoplasmic. The helical transmembrane segment at Tyr71 to Tyr93 threads the bilayer. The Extracellular portion of the chain corresponds to Thr94–Cys107. Cys107 and Cys184 form a disulfide bridge. Residues Asn108–Ile130 traverse the membrane as a helical segment. The 'Ionic lock' involved in activated form stabilization motif lies at Glu131–Trp133. Topologically, residues Glu131–His149 are cytoplasmic. The chain crosses the membrane as a helical span at residues Ala150–Val170. Residues Gly171–Ser199 are Extracellular-facing. N-linked (GlcNAc...) asparagine glycosylation is present at Asn197. A helical membrane pass occupies residues Tyr200 to Gly221. At Arg222–Arg249 the chain is on the cytoplasmic side. The helical transmembrane segment at Met250 to Tyr271 threads the bilayer. The Extracellular segment spans residues Ile272–Leu283. The helical transmembrane segment at Phe284–Cys305 threads the bilayer. Lys293 bears the N6-(retinylidene)lysine mark. At Met306 to Ala349 the chain is on the cytoplasmic side. A lipid anchor (S-palmitoyl cysteine) is attached at Cys320. The disordered stretch occupies residues Glu326–Ala349. Residues Ala331–Ala349 show a composition bias toward low complexity.

Belongs to the G-protein coupled receptor 1 family. Opsin subfamily. In terms of processing, phosphorylated on some or all of the serine and threonine residues present in the C-terminal region. Post-translationally, contains one covalently linked retinal chromophore.

The protein resides in the membrane. The protein localises to the cell projection. It is found in the cilium. It localises to the photoreceptor outer segment. Photoreceptor required for image-forming vision at low light intensity. While most salt water fish species use retinal as chromophore, most freshwater fish use 3-dehydroretinal, or a mixture of retinal and 3-dehydroretinal. Light-induced isomerization of 11-cis to all-trans retinal triggers a conformational change that activates signaling via G-proteins. Subsequent receptor phosphorylation mediates displacement of the bound G-protein alpha subunit by arrestin and terminates signaling. The polypeptide is Rhodopsin (rho) (Myripristis violacea (Lattice soldierfish)).